Here is a 597-residue protein sequence, read N- to C-terminus: Elongation factor 4 (597 aa).

One can recognise a tr-type G domain in the interval 4–181 (SKIRNFSIIA…EIVDKISYPI (178 aa)). Residues 16 to 21 (DHGKST) and 128 to 131 (NKID) contribute to the GTP site.

Belongs to the TRAFAC class translation factor GTPase superfamily. Classic translation factor GTPase family. LepA subfamily.

It localises to the cell membrane. It carries out the reaction GTP + H2O = GDP + phosphate + H(+). Required for accurate and efficient protein synthesis under certain stress conditions. May act as a fidelity factor of the translation reaction, by catalyzing a one-codon backward translocation of tRNAs on improperly translocated ribosomes. Back-translocation proceeds from a post-translocation (POST) complex to a pre-translocation (PRE) complex, thus giving elongation factor G a second chance to translocate the tRNAs correctly. Binds to ribosomes in a GTP-dependent manner. This chain is Elongation factor 4, found in Mycoplasmopsis pulmonis (strain UAB CTIP) (Mycoplasma pulmonis).